The following is a 227-amino-acid chain: DNA repair protein RecO (227 aa).

Belongs to the RecO family.

Involved in DNA repair and RecF pathway recombination. This is DNA repair protein RecO from Pseudomonas putida (strain ATCC 47054 / DSM 6125 / CFBP 8728 / NCIMB 11950 / KT2440).